A 629-amino-acid polypeptide reads, in one-letter code: 1-deoxy-D-xylulose-5-phosphate synthase (629 aa).

Thiamine diphosphate contacts are provided by residues histidine 72 and 113 to 115 (GHA). Mg(2+) is bound at residue aspartate 144. Thiamine diphosphate contacts are provided by residues 145–146 (GA), asparagine 174, tyrosine 287, and glutamate 370. Position 174 (asparagine 174) interacts with Mg(2+).

This sequence belongs to the transketolase family. DXPS subfamily. As to quaternary structure, homodimer. The cofactor is Mg(2+). It depends on thiamine diphosphate as a cofactor.

It carries out the reaction D-glyceraldehyde 3-phosphate + pyruvate + H(+) = 1-deoxy-D-xylulose 5-phosphate + CO2. It participates in metabolic intermediate biosynthesis; 1-deoxy-D-xylulose 5-phosphate biosynthesis; 1-deoxy-D-xylulose 5-phosphate from D-glyceraldehyde 3-phosphate and pyruvate: step 1/1. In terms of biological role, catalyzes the acyloin condensation reaction between C atoms 2 and 3 of pyruvate and glyceraldehyde 3-phosphate to yield 1-deoxy-D-xylulose-5-phosphate (DXP). The sequence is that of 1-deoxy-D-xylulose-5-phosphate synthase from Prochlorococcus marinus (strain MIT 9215).